The chain runs to 246 residues: MSGHSKWHNIQAKKGKADAKRGKVFTKIGKEIAVAVKTGGANLDANSKLRDCVAKAKAANMPMDTINRAIKKGAGELEGVNYEEIIYEGYGPAGVAMLVNVLTDNKNRSASDVRYCFDRNGGNLGASGCVAWMFQRKGQIVIEKNDSIDEDELMMKVLDFGAEDFASEEEVFIITTAQEEFSNVREALEKENFEFVSAELTMVPDNTVKLSLEDSERVQKLIDKLEDSDDVQDVYHNAEFDEAFEG.

Belongs to the TACO1 family.

It localises to the cytoplasm. This Clostridium acetobutylicum (strain ATCC 824 / DSM 792 / JCM 1419 / IAM 19013 / LMG 5710 / NBRC 13948 / NRRL B-527 / VKM B-1787 / 2291 / W) protein is Probable transcriptional regulatory protein CA_C2295.